A 199-amino-acid chain; its full sequence is Holliday junction branch migration complex subunit RuvA (199 aa).

Positions 1-63 are domain I; the sequence is MIGKLNGKID…EEHIHLYGFL (63 aa). Positions 64–141 are domain II; it reads TLEEKNFFNL…TKIFSSSAII (78 aa). The segment at 141 to 145 is flexible linker; sequence IKDSN. The domain III stretch occupies residues 146–199; sequence ISSIAINEVMKALVNLGFTRFEAQNTVQGIITQNPKISIDELIKTALKNRNSSF.

The protein belongs to the RuvA family. Homotetramer. Forms an RuvA(8)-RuvB(12)-Holliday junction (HJ) complex. HJ DNA is sandwiched between 2 RuvA tetramers; dsDNA enters through RuvA and exits via RuvB. An RuvB hexamer assembles on each DNA strand where it exits the tetramer. Each RuvB hexamer is contacted by two RuvA subunits (via domain III) on 2 adjacent RuvB subunits; this complex drives branch migration. In the full resolvosome a probable DNA-RuvA(4)-RuvB(12)-RuvC(2) complex forms which resolves the HJ.

The protein resides in the cytoplasm. Functionally, the RuvA-RuvB-RuvC complex processes Holliday junction (HJ) DNA during genetic recombination and DNA repair, while the RuvA-RuvB complex plays an important role in the rescue of blocked DNA replication forks via replication fork reversal (RFR). RuvA specifically binds to HJ cruciform DNA, conferring on it an open structure. The RuvB hexamer acts as an ATP-dependent pump, pulling dsDNA into and through the RuvAB complex. HJ branch migration allows RuvC to scan DNA until it finds its consensus sequence, where it cleaves and resolves the cruciform DNA. The protein is Holliday junction branch migration complex subunit RuvA of Rickettsia prowazekii (strain Madrid E).